Reading from the N-terminus, the 372-residue chain is Glutamate 5-kinase (372 aa).

Lys-14 contributes to the ATP binding site. Positions 54, 141, and 153 each coordinate substrate. 173-174 (TD) serves as a coordination point for ATP. A PUA domain is found at 280-358 (AGAVVLDNGA…ADIAAILGFV (79 aa)).

Belongs to the glutamate 5-kinase family.

The protein resides in the cytoplasm. The enzyme catalyses L-glutamate + ATP = L-glutamyl 5-phosphate + ADP. Its pathway is amino-acid biosynthesis; L-proline biosynthesis; L-glutamate 5-semialdehyde from L-glutamate: step 1/2. Catalyzes the transfer of a phosphate group to glutamate to form L-glutamate 5-phosphate. This is Glutamate 5-kinase from Janthinobacterium sp. (strain Marseille) (Minibacterium massiliensis).